We begin with the raw amino-acid sequence, 297 residues long: GTPase Era (297 aa).

The Era-type G domain occupies 7-174 (RSGFVSIIGR…VEVVHGFIPA (168 aa)). The segment at 15-22 (GRPNVGKS) is G1. Residue 15–22 (GRPNVGKS) coordinates GTP. Residues 41–45 (QTTRN) are G2. The tract at residues 62-65 (DTPG) is G3. Residues 62 to 66 (DTPGI) and 124 to 127 (NKID) each bind GTP. The interval 124-127 (NKID) is G4. Residues 153 to 155 (VSA) form a G5 region. In terms of domain architecture, KH type-2 spans 205-282 (THDEVPYSVA…FLELFVRVSK (78 aa)).

It belongs to the TRAFAC class TrmE-Era-EngA-EngB-Septin-like GTPase superfamily. Era GTPase family. Monomer.

The protein resides in the cytoplasm. Its subcellular location is the cell inner membrane. In terms of biological role, an essential GTPase that binds both GDP and GTP, with rapid nucleotide exchange. Plays a role in 16S rRNA processing and 30S ribosomal subunit biogenesis and possibly also in cell cycle regulation and energy metabolism. The polypeptide is GTPase Era (Geotalea uraniireducens (strain Rf4) (Geobacter uraniireducens)).